We begin with the raw amino-acid sequence, 926 residues long: MEQNIISTIRDECIRHRSKYLTIAQLTAIAEAKINEFIITGKAKDQDLSSLLDKCIDILSIYKKNSKDIKNIISCKNKGAMISSNSVMIIQLNYVYYKVIHIIVTTNIPHLSEFAKIKLHKSTSDEGNGNNNNNEFQLMNIYNTLLETLLKDENIAKIKSFIKSSIKQTKLNHEQEECNLMRTGSYITSNQLNSLISSSANSASSQMEILLIDIRSRLEFNKSHIDTKNIICLEPISFKMSYSDHDLEKKSLITSPNSEIKMFQSRNLFKFIILYTDANEYNVKQQSVLLDILVNHSFEKPISDDFTKIFILESGFPGWLKSNYGRQVSSSFPSNNNIKDDSVYINGNTSGLSLQHLPKMSPSIRHSMDDSMKEMLVAPTPLNHLQQQQQQQSDNDHVLKRSSSFKKLFSNYTSPNPKNSNSNLYSISSLSISSSPSPLPLHSPDPVKGNSLPINYPETPHLWKNSETDFMTNQREQLNHNSFAHVAPINTKAITSPSRTATPKLQRFPQTISMNLNMNSNGHSSATSTIQPSCLSLSNNDSLDHTDVTPTSSHNYDLDFAVGLENLGNSCYMNCIIQCILGTHELTQIFLDDSYAKHININSKLGSKGILAKYFARLVHMMYKEQVDGSKKIPISPIKFKLACGSVNSLFKTASQQDCQEFCQFLLDGLHEDLNQCGSNPPLKELSQEAEARREKLSLRIASSIEWERFLTTDFSVIVDLFQGQYASRLKCKVCSHTSTTYQPFTVLSIPIPKKNSRNNITIEDCFREFTKCENLEVDEQWLCPHCEKRQPSTKQLTITRLPRNLIVHLKRFDNLLNKNNDFVIYPFLLDLTPFWANDFDGVFPPGVNDDELPIRGQIPPFKYELYGVACHFGTLYGGHYTAYVKKGLKKGWLYFDDTKYKPVKNKADAINSNAYVLFYHRVYGV.

The Rhodanese domain maps to 205–328 (SQMEILLIDI…WLKSNYGRQV (124 aa)). The residue at position 443 (S443) is a Phosphoserine. The region spanning 562-923 (VGLENLGNSC…NAYVLFYHRV (362 aa)) is the USP domain. The Nucleophile role is filled by C571. H880 acts as the Proton acceptor in catalysis.

This sequence belongs to the peptidase C19 family. In terms of assembly, interacts with BRO1, RFU1 and VPS32. Associates with the 26S proteasome.

It localises to the cytoplasm. The protein resides in the late endosome membrane. It carries out the reaction Thiol-dependent hydrolysis of ester, thioester, amide, peptide and isopeptide bonds formed by the C-terminal Gly of ubiquitin (a 76-residue protein attached to proteins as an intracellular targeting signal).. With respect to regulation, RFU1 is an inhibitor of deubiquitination activity. Ubiquitin thioesterase that acts at the late endosome/prevacuolar compartment to recover ubiquitin from ubiquitinated membrane proteins en route to the vacuole. Also removes ubiquitin from soluble proteins targeted to proteasomes. Is essential to maintain a normal level of free ubiquitin. Involved in the ammonium-induced down-regulation of the GAP1 permease and the UME3 destruction in response to oxidative stress. Has a role in the RAD9 checkpoint response to TOP1 poisons. Required for promoting coordination of DNA replication and avoids DNA overreplication. The protein is Ubiquitin carboxyl-terminal hydrolase 4 (DOA4) of Saccharomyces cerevisiae (strain RM11-1a) (Baker's yeast).